A 140-amino-acid chain; its full sequence is Small ribosomal subunit protein uS19 (140 aa).

It belongs to the universal ribosomal protein uS19 family.

Protein S19 forms a complex with S13 that binds strongly to the 16S ribosomal RNA. The polypeptide is Small ribosomal subunit protein uS19 (Sulfolobus acidocaldarius (strain ATCC 33909 / DSM 639 / JCM 8929 / NBRC 15157 / NCIMB 11770)).